The primary structure comprises 116 residues: Large ribosomal subunit protein bL19 (116 aa).

It belongs to the bacterial ribosomal protein bL19 family.

Its function is as follows. This protein is located at the 30S-50S ribosomal subunit interface and may play a role in the structure and function of the aminoacyl-tRNA binding site. In Pseudomonas putida (strain W619), this protein is Large ribosomal subunit protein bL19.